A 1563-amino-acid polypeptide reads, in one-letter code: Rab-3-interacting molecule unc-10 (1563 aa).

The region spanning 7 to 133 (MPDLSHLSAE…AKTGKWFQPE (127 aa)) is the RabBD domain. A compositionally biased stretch (basic and acidic residues) spans 25–35 (FKRQKDEEAKE). Residues 25–50 (FKRQKDEEAKETQISQKASEELSELD) are disordered. The segment at 66 to 121 (TQDDAICQICQKTKFADGIGHKCFYCQLRSCARCGGRAQSKNKAIWACSLCQKRQQ) adopts an FYVE-type zinc-finger fold. The Zn(2+) site is built by C72, C75, C88, C91, C96, C99, C113, and C116. 2 disordered regions span residues 128–466 (KWFQ…DHLN) and 582–605 (GGLD…RNDH). The segment covering 172–182 (NTPNYQNNQQP) has biased composition (polar residues). 2 stretches are compositionally biased toward low complexity: residues 190-284 (NHNQ…RNQT) and 300-316 (QTPQ…VGAA). Residues 326 to 345 (QEQHHQQMNEQRTDNNRMRE) are compositionally biased toward basic and acidic residues. Polar residues-rich tracts occupy residues 356 to 367 (RQPSLEQTTPMN) and 379 to 389 (QRPTFYTGNSE). A compositionally biased stretch (low complexity) spans 395-415 (FDGQMQQGSQQNNQNQNQNNR). Residues 643–733 (HMILHRTENS…DTSVELIVSR (91 aa)) enclose the PDZ domain. The 123-residue stretch at 840-962 (IFGRIEVSFV…PLDGEHSLMC (123 aa)) folds into the C2 1 domain. Disordered stretches follow at residues 1054–1163 (ENDI…YLGD), 1177–1311 (GQMT…GGSA), and 1346–1373 (VGIP…KEST). Over residues 1086 to 1097 (WTQNHQRQSGYT) the composition is skewed to polar residues. Positions 1112-1121 (YNRRQQRRPR) are enriched in basic residues. Over residues 1129 to 1154 (MEREDMYDPTRKHRDDNEYSMRESVR) the composition is skewed to basic and acidic residues. Residues 1181–1230 (PKQHNQQHQPHPLSQAHQQQQTAGVQPQHHQGFQQQQHPQQPNQQMQQMQ) show a composition bias toward low complexity. A compositionally biased stretch (polar residues) spans 1242–1255 (GSETLSVHSTNSMP). The span at 1256 to 1277 (TTMTTVNRRNMNANNTSNDNTS) shows a compositional bias: low complexity. Residues 1278-1288 (FAETPTANTNR) show a composition bias toward polar residues. Residues 1297–1311 (NSLASSSSVAGGGSA) show a composition bias toward low complexity. One can recognise a C2 2 domain in the interval 1417 to 1536 (VLGEIQIALM…LGSQPLIGWY (120 aa)).

As to expression, restricted to discrete puncta in synapse-rich regions of the nervous system including the nerve ring, the ventral nerve cord and the dorsal nerve cord. Localized expression was found in the head.

The protein localises to the synapse. Functionally, regulates the efficiency of a post-docking step of the release pathway. Acts after vesicle docking likely via regulating priming. May regulate the conformational changes in syntaxin. Binding of vesicles via rab-3[GTP] to Rim may signal the presence of a docked synaptic vesicle. Rim may then signal to unc-13 to change the conformation of syntaxin from the closed to the open state. Syntaxin could then engage synaptobrevin on the docked vesicle to form SNARE complexes and to prime the vesicle for release. Not required for the development or the structural organization of synapses. May play a role in regulating entry into the dauer state. The chain is Rab-3-interacting molecule unc-10 from Caenorhabditis elegans.